Consider the following 1355-residue polypeptide: Probable major glycoprotein (1355 aa).

Residues 1 to 16 (MKKTMLAIILIPLVYA) form the signal peptide. 21 N-linked (GlcNAc...) asparagine; by host glycosylation sites follow: asparagine 81, asparagine 112, asparagine 129, asparagine 169, asparagine 173, asparagine 192, asparagine 542, asparagine 655, asparagine 682, asparagine 744, asparagine 780, asparagine 811, asparagine 815, asparagine 860, asparagine 865, asparagine 882, asparagine 895, asparagine 1213, asparagine 1225, asparagine 1267, and asparagine 1274. Residues 1245 to 1299 (QIVSMEMEIQDLKLELIQLQKINTSVHMENITGDIDAMKATIEEYRAEMAKLRVT) are a coiled coil. The helical transmembrane segment at 1308-1328 (FIYAILGVIAIGALIAIIFMA) threads the bilayer.

The protein resides in the host membrane. The chain is Probable major glycoprotein (ORF46) from Ictaluridae (bullhead catfishes).